Here is a 228-residue protein sequence, read N- to C-terminus: Carbonic anhydrase (228 aa).

Residues Cys-56, Asp-58, His-112, and Cys-115 each coordinate Zn(2+).

This sequence belongs to the beta-class carbonic anhydrase family. Requires Zn(2+) as cofactor.

The enzyme catalyses hydrogencarbonate + H(+) = CO2 + H2O. In terms of biological role, catalyzes the reversible hydration of CO(2) to H(2)CO(3). The main role may be to provide inorganic carbon for the bicarbonate-dependent carboxylation reactions catalyzed by pyruvate carboxylase, acetyl-CoA carboxylase and carbamoyl-phosphate synthetase. Involved in osmoadaptation. The polypeptide is Carbonic anhydrase (Emericella nidulans (strain FGSC A4 / ATCC 38163 / CBS 112.46 / NRRL 194 / M139) (Aspergillus nidulans)).